The following is a 388-amino-acid chain: Putative F-box/kelch-repeat protein At2g29820 (388 aa).

The interval 6–33 is disordered; sequence EILDGPNGDDPNNNPQEGEDNQNENPQE. Over residues 9–21 the composition is skewed to low complexity; the sequence is DGPNGDDPNNNPQ. Residues 22–33 are compositionally biased toward acidic residues; that stretch reads EGEDNQNENPQE. Residues 38 to 84 enclose the F-box domain; that stretch reads LRNLLELPEELIERLIAHIPRCYYPYISLVSRDFRQVITSDKLFRTR. Kelch repeat units lie at residues 140–187 and 189–233; these read KMYV…EIGG and IYVI…FSTY.

The sequence is that of Putative F-box/kelch-repeat protein At2g29820 from Arabidopsis thaliana (Mouse-ear cress).